A 384-amino-acid chain; its full sequence is 8-amino-7-oxononanoate synthase (384 aa).

R21 provides a ligand contact to substrate. Position 108 to 109 (108 to 109) interacts with pyridoxal 5'-phosphate; sequence GF. H133 serves as a coordination point for substrate. S179, H207, and T233 together coordinate pyridoxal 5'-phosphate. K236 bears the N6-(pyridoxal phosphate)lysine mark. T352 contacts substrate.

It belongs to the class-II pyridoxal-phosphate-dependent aminotransferase family. BioF subfamily. As to quaternary structure, homodimer. It depends on pyridoxal 5'-phosphate as a cofactor.

The catalysed reaction is 6-carboxyhexanoyl-[ACP] + L-alanine + H(+) = (8S)-8-amino-7-oxononanoate + holo-[ACP] + CO2. The protein operates within cofactor biosynthesis; biotin biosynthesis. Catalyzes the decarboxylative condensation of pimeloyl-[acyl-carrier protein] and L-alanine to produce 8-amino-7-oxononanoate (AON), [acyl-carrier protein], and carbon dioxide. The protein is 8-amino-7-oxononanoate synthase of Escherichia coli O9:H4 (strain HS).